Here is a 563-residue protein sequence, read N- to C-terminus: (-)-germacrene D synthase (563 aa).

The stretch at 44–71 (TEITAAEKEELEKQKEKVKNLLDQTPND) forms a coiled coil. Mn(2+)-binding residues include Asp-314 and Asp-318. Residues 314–318 (DDIYD) carry the DDXXD motif motif. Homodimerization stretches follow at residues 320–326 (YGSLDEL) and 392–429 (EAEW…VGME). 2 residues coordinate Mn(2+): Asp-459 and Glu-467.

This sequence belongs to the terpene synthase family. In terms of assembly, homodimer. Requires Mn(2+) as cofactor. It depends on Mg(2+) as a cofactor. Expressed in peltate glandular trichomes. Present at low levels in flowers, leaves and stems.

The enzyme catalyses (2E,6E)-farnesyl diphosphate = (-)-germacrene D + diphosphate. The protein operates within secondary metabolite biosynthesis; terpenoid biosynthesis. Functionally, involved in the biosynthesis of phenolic sesquiterpenes natural products. Sesquiterpene synthase that catalyzes mainly the formation of (-)-germacrene D and minor amounts of other sesquiterpenes (e.g. bicyclo-germacrene) from farnesyl diphosphate (FPP). Also triggers moderate amounts formation of myrcene, limonene, terpinolene and linalool in the presence of geranyl diphosphate (GPP). This chain is (-)-germacrene D synthase, found in Origanum vulgare (Wild marjoram).